A 125-amino-acid polypeptide reads, in one-letter code: Calcitonin receptor-stimulating peptide 1 (125 aa).

The signal sequence occupies residues 1 to 25; that stretch reads MGFWKFPPFLVLSILVLYQAGMFHA. Residues 26-77 constitute a propeptide that is removed on maturation; the sequence is APFRSVFDGRFDPATLDEEESRLLLAAMVNDYEQMRARESEKAQKTEGSRIQ. C81 and C86 are joined by a disulfide.

The protein belongs to the calcitonin family.

Its subcellular location is the secreted. Stimulates cAMP production in porcine kidney cell line LLC-PK1 via the calcitonin receptor (CT) but not via the CT-like (CL) receptor. In Capra hircus (Goat), this protein is Calcitonin receptor-stimulating peptide 1 (CRSP1).